Here is a 504-residue protein sequence, read N- to C-terminus: Glutamate--tRNA ligase (504 aa).

Residues 9–19 carry the 'HIGH' region motif; it reads PSPTGDPHVGT. The 'KMSKS' region motif lies at 248-252; the sequence is KISKR. K251 is an ATP binding site.

This sequence belongs to the class-I aminoacyl-tRNA synthetase family. Glutamate--tRNA ligase type 1 subfamily. As to quaternary structure, monomer.

It localises to the cytoplasm. It catalyses the reaction tRNA(Glu) + L-glutamate + ATP = L-glutamyl-tRNA(Glu) + AMP + diphosphate. Its function is as follows. Catalyzes the attachment of glutamate to tRNA(Glu) in a two-step reaction: glutamate is first activated by ATP to form Glu-AMP and then transferred to the acceptor end of tRNA(Glu). The polypeptide is Glutamate--tRNA ligase (Acidothermus cellulolyticus (strain ATCC 43068 / DSM 8971 / 11B)).